A 483-amino-acid polypeptide reads, in one-letter code: GTPase Der (483 aa).

EngA-type G domains are found at residues 3–167 (FTLA…GEER) and 212–387 (LRIA…EIWN). GTP-binding positions include 9-16 (GRPNVGKS), 56-60 (DTAGL), 119-122 (NKAE), 218-225 (GRPNAGKS), 265-269 (DTAGM), and 330-333 (NKWD). In terms of domain architecture, KH-like spans 388-472 (RRISTGRLNR…PIRLSLRTSD (85 aa)).

The protein belongs to the TRAFAC class TrmE-Era-EngA-EngB-Septin-like GTPase superfamily. EngA (Der) GTPase family. In terms of assembly, associates with the 50S ribosomal subunit.

In terms of biological role, GTPase that plays an essential role in the late steps of ribosome biogenesis. This is GTPase Der from Brucella suis biovar 1 (strain 1330).